Here is a 180-residue protein sequence, read N- to C-terminus: ATP-dependent protease subunit HslV (180 aa).

Threonine 6 is an active-site residue. The Na(+) site is built by alanine 164, cysteine 167, and threonine 170.

The protein belongs to the peptidase T1B family. HslV subfamily. As to quaternary structure, a double ring-shaped homohexamer of HslV is capped on each side by a ring-shaped HslU homohexamer. The assembly of the HslU/HslV complex is dependent on binding of ATP.

It is found in the cytoplasm. It catalyses the reaction ATP-dependent cleavage of peptide bonds with broad specificity.. Its activity is regulated as follows. Allosterically activated by HslU binding. In terms of biological role, protease subunit of a proteasome-like degradation complex believed to be a general protein degrading machinery. The sequence is that of ATP-dependent protease subunit HslV from Borrelia hermsii (strain HS1 / DAH).